The sequence spans 478 residues: PTS system mannitol-specific EIICB component (478 aa).

At 1-29 (MQQQEQQQGGMKVKVQRFGSYLSGMIMPN) the chain is on the cytoplasmic side. One can recognise a PTS EIIC type-2 domain in the interval 18-347 (FGSYLSGMIM…VILKSSKASE (330 aa)). The chain crosses the membrane as a helical span at residues 30 to 51 (IGAFIAWGIITALFIPAGWFPN). Residues 52-55 (EQLN) are Extracellular-facing. A helical transmembrane segment spans residues 56 to 76 (TLVSPMITYLLPLLIAYTGGK). The Cytoplasmic portion of the chain corresponds to 77-139 (MIYDHRGGVV…QGFEMLINNF (63 aa)). A helical transmembrane segment spans residues 140-161 (TAGIVGAALTILAFYAIGPVVL). Residues 162 to 170 (TLNKLLAAG) are Extracellular-facing. Residues 171 to 191 (VEVIVHANLLPVASVFVEPAK) form a helical membrane-spanning segment. Residues 192-278 (VLFLNNAINH…ILMKPALILA (87 aa)) lie on the Cytoplasmic side of the membrane. The helical transmembrane segment at 279–298 (AIAGGASGLLTFTIFNAGLV) threads the bilayer. Topologically, residues 299–318 (AAASPGSIIALMAMTPRGGY) are extracellular. A helical membrane pass occupies residues 319-340 (FGVLAGVLVAAAVSFIVSAVIL). Over 341–478 (KSSKASEEDL…YDELIEKLKK (138 aa)) the chain is Cytoplasmic. One can recognise a PTS EIIB type-2 domain in the interval 390-478 (NKIIFACDAG…YDELIEKLKK (89 aa)). Cys-396 functions as the Phosphocysteine intermediate; for EIIB activity in the catalytic mechanism. At Cys-396 the chain carries Phosphocysteine; by EIIA.

Homodimer.

The protein resides in the cell membrane. The enzyme catalyses D-mannitol(out) + N(pros)-phospho-L-histidyl-[protein] = D-mannitol 1-phosphate(in) + L-histidyl-[protein]. Its function is as follows. The phosphoenolpyruvate-dependent sugar phosphotransferase system (sugar PTS), a major carbohydrate active transport system, catalyzes the phosphorylation of incoming sugar substrates concomitantly with their translocation across the cell membrane. The enzyme II CmtAB PTS system is involved in D-mannitol transport. The chain is PTS system mannitol-specific EIICB component from Bacillus subtilis (strain 168).